The chain runs to 126 residues: DNA-directed RNA polymerase subunit omega (126 aa).

It belongs to the RNA polymerase subunit omega family. The RNAP catalytic core consists of 2 alpha, 1 beta, 1 beta' and 1 omega subunit. When a sigma factor is associated with the core the holoenzyme is formed, which can initiate transcription.

It carries out the reaction RNA(n) + a ribonucleoside 5'-triphosphate = RNA(n+1) + diphosphate. Promotes RNA polymerase assembly. Latches the N- and C-terminal regions of the beta' subunit thereby facilitating its interaction with the beta and alpha subunits. The protein is DNA-directed RNA polymerase subunit omega of Rickettsia bellii (strain OSU 85-389).